We begin with the raw amino-acid sequence, 39 residues long: Natriuretic peptide TcNPa (39 aa).

Residues 1–8 (SGSETAKI) constitute a propeptide that is removed on maturation. Cysteine 12 and cysteine 28 are joined by a disulfide. Threonine 35 carries O-linked (GalNAc...) threonine glycosylation.

Belongs to the natriuretic peptide family. Post-translationally, O-linked glycans consist of galactosyl-beta(1-3)-N-acetylgalactosamine (Gal-GalNAc). In terms of processing, the synthetic non-glycosylated form shows higher potency on natriuretic receptors (EC(50)=672.90 nM) and NPR2 (EC(50)=261.0 nM). Expressed by the venom gland.

The protein resides in the secreted. Functionally, snake venom natriuretic peptide that targets both NPR1 (EC(50)=1080.0 nM) and NPR2 (EC(50)=328.60 nM). Exhibits hypotensive and vasodepressor activities. This is Natriuretic peptide TcNPa from Tropidechis carinatus (Australian rough-scaled snake).